The sequence spans 352 residues: Ubiquitin thioesterase otulin (352 aa).

The disordered stretch occupies residues 1–48 (MSRGTMPQPEAWPGASCAETPAREAAATARDGGKAAASGQPRPEMQCP). Positions 18 to 37 (AETPAREAAATARDGGKAAA) are enriched in low complexity. A PIM motif motif is present at residues 52 to 57 (EEDMYR). Phosphotyrosine is present on Tyr56. 2 linear diubiquitin binding regions span residues 95–96 (EW) and 124–126 (RGD). The 229-residue stretch at 118-346 (TSIRRVRGDN…DRHYNIPVRV (229 aa)) folds into the OTU domain. Asp126 is an active-site residue. The active-site Nucleophile is Cys129. 3 linear diubiquitin binding regions span residues 255–259 (FFSVL), 283–289 (TGGLEQV), and 336–338 (DDR). The active site involves His339.

This sequence belongs to the peptidase C65 family. Otulin subfamily. As to quaternary structure, interacts (via the PUB domain) with RNF31 (via the PIM motif); the interaction is direct. Interacts with DVL2. Post-translationally, ubiquitinated. In terms of processing, acetylated. Phosphorylated. Phosphorylation at Tyr-56 prevents interaction with RNF31; dephosphorylation promotes interaction with RNF31 and the LUBAC complex.

It is found in the cytoplasm. The catalysed reaction is Thiol-dependent hydrolysis of ester, thioester, amide, peptide and isopeptide bonds formed by the C-terminal Gly of ubiquitin (a 76-residue protein attached to proteins as an intracellular targeting signal).. Its function is as follows. Deubiquitinase that specifically removes linear ('Met-1'-linked) polyubiquitin chains to substrates and acts as a regulator of angiogenesis and innate immune response. Required during angiogenesis, craniofacial and neuronal development by regulating the canonical Wnt signaling together with the LUBAC complex. Acts as a negative regulator of NF-kappa-B by regulating the activity of the LUBAC complex. OTULIN function is mainly restricted to homeostasis of the LUBAC complex: acts by removing 'Met-1'-linked autoubiquitination of the LUBAC complex, thereby preventing inactivation of the LUBAC complex. Acts as a key negative regulator of inflammation by restricting spontaneous inflammation and maintaining immune homeostasis. In myeloid cell, required to prevent unwarranted secretion of cytokines leading to inflammation and autoimmunity by restricting linear polyubiquitin formation. Plays a role in innate immune response by restricting linear polyubiquitin formation on LUBAC complex in response to NOD2 stimulation, probably to limit NOD2-dependent pro-inflammatory signaling. In Homo sapiens (Human), this protein is Ubiquitin thioesterase otulin.